The sequence spans 961 residues: DNA replication licensing factor MCM2 (961 aa).

Over residues 1 to 17 (MDDSENNAPSTPGSPGF) the composition is skewed to polar residues. Disordered regions lie at residues 1–81 (MDDS…FNDN) and 120–220 (AEAE…EEDE). Positions 39–78 (SDDDDDDVVGAEEAEVDPNVLPEDDGVVAAEEEEDGEDLF) are enriched in acidic residues. 2 stretches are compositionally biased toward basic and acidic residues: residues 120–146 (AEAE…LHDQ) and 166–176 (PPREPRTPRSD). Residues 205–220 (QTDDDPYEDEFDEEDE) show a composition bias toward acidic residues. Residues 380–406 (CSKCGTVLGPFFQNSYTEVKVGSCPEC) form a C4-type zinc finger. The MCM domain maps to 524 to 730 (IGERIVKSIA…FTDEMLARFV (207 aa)). 574-581 (GDPGTAKS) provides a ligand contact to ATP. The short motif at 706–709 (SRFD) is the Arginine finger element.

It belongs to the MCM family. As to quaternary structure, component of the minichromosome maintenance (MCM) complex, a heterotetramer composed of MCM2, MCM3, MCM4, MCM5, MCM6 and MCM7.

It localises to the nucleus. It carries out the reaction ATP + H2O = ADP + phosphate + H(+). Functionally, probable component of the MCM2-7 complex (MCM complex) that may function as a DNA helicase and which is essential to undergo a single round of replication initiation and elongation per cell cycle in eukaryotic cells. In Oryza sativa subsp. indica (Rice), this protein is DNA replication licensing factor MCM2.